We begin with the raw amino-acid sequence, 266 residues long: Glutamate racemase (266 aa).

Substrate contacts are provided by residues 9–10 (DS) and 41–42 (YG). C73 (proton donor/acceptor) is an active-site residue. Substrate is bound at residue 74–75 (NT). C183 serves as the catalytic Proton donor/acceptor. 184-185 (TH) contributes to the substrate binding site.

Belongs to the aspartate/glutamate racemases family.

It catalyses the reaction L-glutamate = D-glutamate. It functions in the pathway cell wall biogenesis; peptidoglycan biosynthesis. Functionally, provides the (R)-glutamate required for cell wall biosynthesis. This Shewanella woodyi (strain ATCC 51908 / MS32) protein is Glutamate racemase.